We begin with the raw amino-acid sequence, 560 residues long: MEGEMKCPIEEIREKPEMRKAQQTYEVQVEVEDTPDTTFSWRKLWAFTGPGFLMSIAYLDPGNIESDLQAGAISYFKLIWVLLVAHIMGLLLQRLAARLGVVSGKHMAEIAFSYYPKIPRLVLWMLVESAIVGSDMQEVIGTAISFYLLSNGVIPLWAGVLITICDTFTFLFLEKYGVRKFEAFFCFLITCMAITFGYEFGVSAPDAGKMFSGMFVPWCNGCDNNMVMQGVAIIGAVIMPHNFYLHSALVKSRRVDRRRAEKVTEANKYFFIESAFALFVSFIINTLVISVFAQGMYGKTNQDIRDTCYNNTHNGMPDFYKVEFPANNDAAQSDIYHAGIFLGCTFGIFALYVWAVGILAAGQSSTMTGTYAGQFAMEGFIQIKLPQWKRILITRSLAILPTLAVVIFSGGIDNISSLNDFLNCLQLIQLPFALIPVLTFVSDRNIMHEYKLASVSKVVSIVISLIILFINFYFLYSWIGSTFGYNAVSIPITIFCAIFYIIFIAYLTYYCLVAMEFISPIQTKWLAEPIYHDFDAPWLEDSENPSTKNTISDDELSMRY.

The Cytoplasmic segment spans residues 1 to 43 (MEGEMKCPIEEIREKPEMRKAQQTYEVQVEVEDTPDTTFSWRK). The helical transmembrane segment at 44 to 64 (LWAFTGPGFLMSIAYLDPGNI) threads the bilayer. Residues 65 to 71 (ESDLQAG) are Extracellular-facing. The chain crosses the membrane as a helical span at residues 72–92 (AISYFKLIWVLLVAHIMGLLL). Residues 93 to 120 (QRLAARLGVVSGKHMAEIAFSYYPKIPR) lie on the Cytoplasmic side of the membrane. A helical membrane pass occupies residues 121-141 (LVLWMLVESAIVGSDMQEVIG). At 142–152 (TAISFYLLSNG) the chain is on the extracellular side. The chain crosses the membrane as a helical span at residues 153 to 173 (VIPLWAGVLITICDTFTFLFL). The Cytoplasmic segment spans residues 174 to 182 (EKYGVRKFE). A helical transmembrane segment spans residues 183 to 203 (AFFCFLITCMAITFGYEFGVS). The Extracellular portion of the chain corresponds to 204–229 (APDAGKMFSGMFVPWCNGCDNNMVMQ). The chain crosses the membrane as a helical span at residues 230 to 250 (GVAIIGAVIMPHNFYLHSALV). The Cytoplasmic portion of the chain corresponds to 251–268 (KSRRVDRRRAEKVTEANK). A helical transmembrane segment spans residues 269–289 (YFFIESAFALFVSFIINTLVI). Topologically, residues 290-339 (SVFAQGMYGKTNQDIRDTCYNNTHNGMPDFYKVEFPANNDAAQSDIYHAG) are extracellular. An N-linked (GlcNAc...) asparagine glycan is attached at N310. The helical transmembrane segment at 340 to 360 (IFLGCTFGIFALYVWAVGILA) threads the bilayer. At 361-390 (AGQSSTMTGTYAGQFAMEGFIQIKLPQWKR) the chain is on the cytoplasmic side. The chain crosses the membrane as a helical span at residues 391-411 (ILITRSLAILPTLAVVIFSGG). Residues 412-420 (IDNISSLND) lie on the Extracellular side of the membrane. Residue N414 is glycosylated (N-linked (GlcNAc...) asparagine). The helical transmembrane segment at 421-441 (FLNCLQLIQLPFALIPVLTFV) threads the bilayer. Over 442–458 (SDRNIMHEYKLASVSKV) the chain is Cytoplasmic. The chain crosses the membrane as a helical span at residues 459–479 (VSIVISLIILFINFYFLYSWI). Residues 480 to 486 (GSTFGYN) are Extracellular-facing. The helical transmembrane segment at 487-507 (AVSIPITIFCAIFYIIFIAYL) threads the bilayer. Residues 508 to 560 (TYYCLVAMEFISPIQTKWLAEPIYHDFDAPWLEDSENPSTKNTISDDELSMRY) are Cytoplasmic-facing.

The protein belongs to the NRAMP family. Expressed in dopaminergic neurons (at protein level). Expressed in intestine with a weaker expression in the most proximal and distal regions. Weakly expressed in the hyp1-6, hyp7 and hyp8-12 hypodermis and in head and tail neurons.

The protein localises to the apical cell membrane. It is found in the cytoplasmic vesicle membrane. Functionally, probable divalent metal ion transporter which regulates the uptake of several heavy metals such as Mn(2+), Al(3+) and iron. Plays a role in modulating Al(3+)-induced dopamine (DA) neuron degeneration through the intracellular sequestration of Al(3+). The chain is NRAMP-like transporter smf-3 from Caenorhabditis elegans.